A 287-amino-acid polypeptide reads, in one-letter code: Nematocyst expressed protein 6 (287 aa).

The N-terminal stretch at 1 to 20 is a signal peptide; that stretch reads MKGFIFAGVLVSALICLAEG. The 197-residue stretch at 53–249 folds into the Peptidase M12A domain; sequence RAALRDRYLW…RQTNLMYKCN (197 aa). 2 disulfide bridges follow: C95–C248 and C116–C139. A Zn(2+)-binding site is contributed by H146. The active site involves E147. Zn(2+) contacts are provided by H150 and H156. Positions 249-287 are disordered; it reads NAQGDSELQPVNDEDEDKDGGDSKKKPDPKGPKPGEIEE. Residues 268-287 are compositionally biased toward basic and acidic residues; sequence GGDSKKKPDPKGPKPGEIEE.

It depends on Zn(2+) as a cofactor. As to expression, nematocyte and pharyngeal gland.

The protein resides in the secreted. It localises to the nematocyst. Its function is as follows. Metalloprotease. This Nematostella vectensis (Starlet sea anemone) protein is Nematocyst expressed protein 6.